A 438-amino-acid chain; its full sequence is Probable tRNA pseudouridine synthase D (438 aa).

The Nucleophile role is filled by Asp86. In terms of domain architecture, TRUD spans 165-390 (GVPNFFGIQR…SKGTRREVLL (226 aa)).

Belongs to the pseudouridine synthase TruD family.

It catalyses the reaction uridine(13) in tRNA = pseudouridine(13) in tRNA. Functionally, could be responsible for synthesis of pseudouridine from uracil-13 in transfer RNAs. The polypeptide is Probable tRNA pseudouridine synthase D (Methanosarcina mazei (strain ATCC BAA-159 / DSM 3647 / Goe1 / Go1 / JCM 11833 / OCM 88) (Methanosarcina frisia)).